The following is a 243-amino-acid chain: Probable transcriptional regulatory protein LCABL_11860 (243 aa).

The interval 1–23 (MSGHSKWHNIQGRKNAQDSKRGK) is disordered.

The protein belongs to the TACO1 family.

It is found in the cytoplasm. This is Probable transcriptional regulatory protein LCABL_11860 from Lacticaseibacillus casei (strain BL23) (Lactobacillus casei).